The following is a 20-amino-acid chain: ATP synthase subunit beta, chloroplastic (20 aa).

Residues 1–10 (METTNESLGY) show a composition bias toward polar residues. A disordered region spans residues 1–20 (METTNESLGYTDQIIGPVLD).

It belongs to the ATPase alpha/beta chains family. F-type ATPases have 2 components, CF(1) - the catalytic core - and CF(0) - the membrane proton channel. CF(1) has five subunits: alpha(3), beta(3), gamma(1), delta(1), epsilon(1). CF(0) has four main subunits: a(1), b(1), b'(1) and c(9-12).

The protein localises to the plastid. Its subcellular location is the chloroplast thylakoid membrane. The catalysed reaction is ATP + H2O + 4 H(+)(in) = ADP + phosphate + 5 H(+)(out). Functionally, produces ATP from ADP in the presence of a proton gradient across the membrane. The catalytic sites are hosted primarily by the beta subunits. The protein is ATP synthase subunit beta, chloroplastic of Chattonella marina var. antiqua (Red tide flagellate).